We begin with the raw amino-acid sequence, 494 residues long: Serine/arginine-rich splicing factor 4 (494 aa).

Residues 2–72 (PRVYIGRLSY…ERVIVEHARG (71 aa)) form the RRM 1 domain. Disordered regions lie at residues 72–95 (GPRR…GRDK) and 169–494 (KIRL…HSRS). Phosphoserine occurs at positions 78 and 84. Residues 104-177 (YRLIVENLSS…RKIRLVEDKP (74 aa)) enclose the RRM 2 domain. 2 stretches are compositionally biased toward basic residues: residues 179-206 (SRRR…KSRS) and 214-246 (SHSK…KKEK). Positions 247-256 (SRSPSKEKSR) are enriched in basic and acidic residues. The span at 257–267 (SRSHSAGKSRS) shows a compositional bias: basic residues. Basic and acidic residues predominate over residues 268 to 278 (KSKDQAEEKIQ). Over residues 286–302 (PKSRSPSRHKSKSKSRS) the composition is skewed to basic residues. A phosphoserine mark is found at serine 288, serine 290, and serine 292. Positions 303–327 (RSQERRVEEEKRGSVSRGRSQEKSL) are enriched in basic and acidic residues. Composition is skewed to basic residues over residues 328–359 (RQSR…GRKR) and 367–382 (RSRS…KRGS). The segment covering 411–431 (VSKEREHAKSESSQREGRGES) has biased composition (basic and acidic residues). Residues serine 431, serine 446, serine 456, serine 458, and serine 460 each carry the phosphoserine modification. The span at 449-460 (KSKPNLPSESRS) shows a compositional bias: low complexity. A compositionally biased stretch (basic residues) spans 461-494 (RSKSASKTRSRSKSRSRSASRSPSRSRSRSHSRS).

The protein belongs to the splicing factor SR family. In terms of assembly, found in a pre-mRNA splicing complex with SRSF4/SFRS4, SRSF5/SFRS5, SNRNP70, SNRPA1, SRRM1 and SRRM2. Interacts with PNN. Extensively phosphorylated on serine residues in the RS domain.

The protein localises to the nucleus speckle. Functionally, plays a role in alternative splice site selection during pre-mRNA splicing. Represses the splicing of MAPT/Tau exon 10. In Homo sapiens (Human), this protein is Serine/arginine-rich splicing factor 4 (SRSF4).